Here is a 511-residue protein sequence, read N- to C-terminus: NADH-quinone oxidoreductase subunit N 1 (511 aa).

14 helical membrane-spanning segments follow: residues 15-35 (LALPMLVLSGFAVAILLLDLV), 46-66 (ALALAGLAAATMSLAKVWQAV), 89-109 (FAIYFYLLFIVGAAVAILMSI), 120-140 (GEYHALILFATIGMMCMASGM), 142-162 (LILLFVGLELMALSTYVLVGF), 177-197 (LLLGAFSSGIFAYGLSLFYGL), 221-241 (PIALLALITTATGLLFKIAAV), 264-284 (VAVKAAGWAMLLRIFLFMLWP), 289-309 (YTPILIFVAVATMIGGNFAAL), 317-337 (LLAYSSISHVGYMLLGLVASD), 347-367 (GILVYLAVYTFMNLGAFAVIT), 393-413 (AVLLLVFLLSLAGIPPLAGFW), 426-446 (GHYTLAVVAVLFAVLGMYYYL), and 471-491 (AALWISALGTLGIGLFPEVFL).

It belongs to the complex I subunit 2 family. NDH-1 is composed of 14 different subunits. Subunits NuoA, H, J, K, L, M, N constitute the membrane sector of the complex.

The protein localises to the cell inner membrane. It carries out the reaction a quinone + NADH + 5 H(+)(in) = a quinol + NAD(+) + 4 H(+)(out). Functionally, NDH-1 shuttles electrons from NADH, via FMN and iron-sulfur (Fe-S) centers, to quinones in the respiratory chain. The immediate electron acceptor for the enzyme in this species is believed to be ubiquinone. Couples the redox reaction to proton translocation (for every two electrons transferred, four hydrogen ions are translocated across the cytoplasmic membrane), and thus conserves the redox energy in a proton gradient. In Koribacter versatilis (strain Ellin345), this protein is NADH-quinone oxidoreductase subunit N 1.